The following is a 249-amino-acid chain: Triosephosphate isomerase (249 aa).

The substrate site is built by Asn-12 and Lys-14. Residue Lys-14 is modified to N6-acetyllysine. Tyr-68 bears the 3'-nitrotyrosine mark. A Phosphoserine modification is found at Ser-80. The active-site Electrophile is the His-96. Residue Ser-106 is modified to Phosphoserine. Lys-142 participates in a covalent cross-link: Glycyl lysine isopeptide (Lys-Gly) (interchain with G-Cter in SUMO1). Lys-149 is subject to N6-succinyllysine. Lys-156 carries the N6-acetyllysine; alternate modification. N6-succinyllysine; alternate is present on Lys-156. Position 159 is a phosphoserine (Ser-159). Residue Glu-166 is the Proton acceptor of the active site. Phosphothreonine is present on Thr-173. N6-acetyllysine; alternate is present on Lys-194. Lys-194 bears the N6-succinyllysine; alternate mark. Residue Lys-194 is modified to N6-methyllysine; alternate. Ser-198 carries the post-translational modification Phosphoserine. A 3'-nitrotyrosine modification is found at Tyr-209. Phosphoserine is present on Ser-212. Phosphothreonine is present on Thr-214. A Phosphoserine modification is found at Ser-223. At Lys-238 the chain carries N6-acetyllysine.

This sequence belongs to the triosephosphate isomerase family. Homodimer.

The protein resides in the cytoplasm. The catalysed reaction is dihydroxyacetone phosphate = methylglyoxal + phosphate. It catalyses the reaction D-glyceraldehyde 3-phosphate = dihydroxyacetone phosphate. The protein operates within carbohydrate degradation; glycolysis; D-glyceraldehyde 3-phosphate from glycerone phosphate: step 1/1. It functions in the pathway carbohydrate biosynthesis; gluconeogenesis. Its function is as follows. Triosephosphate isomerase is an extremely efficient metabolic enzyme that catalyzes the interconversion between dihydroxyacetone phosphate (DHAP) and D-glyceraldehyde-3-phosphate (G3P) in glycolysis and gluconeogenesis. It is also responsible for the non-negligible production of methylglyoxal a reactive cytotoxic side-product that modifies and can alter proteins, DNA and lipids. This is Triosephosphate isomerase (TPI1) from Gorilla gorilla gorilla (Western lowland gorilla).